Reading from the N-terminus, the 667-residue chain is MLRDKLKLLQAQIEQERSKSNYRVNEVKEEFDKEIQKLRQQLQSLEDEKKFLVLESRGINAVNQRIKTSPPEAFSRVSSQHRALNTPDSSHIQEHIPKKRKTEISTQPSIVLNPNRVIKDEVSAFFDCLYVHRIVGVELSTIEILNCIKFEHIDEFNYKLLKINKDTSIGSGIVDFLQSCKKNMKLNELVDSVLEHLATLIKAIIINDQELNFSVPFLVALMVQTILFRPSAVSVNSLKDLFIFTCDLIRKFQIVLKKPLHKSPLEVDLGPQIFQYELIDNLILVYSFDLLESTTKVIRIQQLSETLYMEFFDESLMKSLEAVYKLTLTISFKPVINVIYSMVAVFVTITNIMNNDNLSKPFGSSKWWSDLLTRLYQLLGKRILNFHVFDDTNTNNMHIDRFFDFYSLLRNMGTNSVSPLLAQLVTRGEIKGIPNIVLKDDIIDKYESKKEKGVLSDNLELEKWFVYLKDDILSIIENLMGYFKKDSKITNGEILINLTKLISVEQSQFMDHLIDQDTDVFAVRMNLVEHALSIIYRMWKYYEENITQESIKEVESELVMSLWRIIVCKHASKKICKDDLMEHRILINQMENLHLQDTIDLYEDAFEDMPEYIKEELECSINNGTQQKMQVQYDDIYIEMARYILESKLTNFISVENTDSLYLSMGF.

A coiled-coil region spans residues 28–55; sequence KEEFDKEIQKLRQQLQSLEDEKKFLVLE.

As to quaternary structure, forms a complex with MEC1.

The protein localises to the cytoplasm. Its subcellular location is the nucleus. Forms a complex with the serine/threonine kinase MEC1 which activates checkpoint signaling upon genotoxic stresses. The MEC1-LCD1 complex is recruited to DNA lesions in order to initiates the DNA repair by homologous recombination. Required for cell growth and meiotic recombination. The polypeptide is DNA damage checkpoint protein LCD1 (LCD1) (Candida glabrata (strain ATCC 2001 / BCRC 20586 / JCM 3761 / NBRC 0622 / NRRL Y-65 / CBS 138) (Yeast)).